The sequence spans 177 residues: uncharacterized protein (177 aa).

This is an uncharacterized protein from Schizosaccharomyces pombe (strain 972 / ATCC 24843) (Fission yeast).